A 370-amino-acid polypeptide reads, in one-letter code: 4-hydroxy-3-methylbut-2-en-1-yl diphosphate synthase (flavodoxin) (370 aa).

[4Fe-4S] cluster contacts are provided by Cys-270, Cys-273, Cys-305, and Glu-312.

The protein belongs to the IspG family. [4Fe-4S] cluster serves as cofactor.

It catalyses the reaction (2E)-4-hydroxy-3-methylbut-2-enyl diphosphate + oxidized [flavodoxin] + H2O + 2 H(+) = 2-C-methyl-D-erythritol 2,4-cyclic diphosphate + reduced [flavodoxin]. Its pathway is isoprenoid biosynthesis; isopentenyl diphosphate biosynthesis via DXP pathway; isopentenyl diphosphate from 1-deoxy-D-xylulose 5-phosphate: step 5/6. Its function is as follows. Converts 2C-methyl-D-erythritol 2,4-cyclodiphosphate (ME-2,4cPP) into 1-hydroxy-2-methyl-2-(E)-butenyl 4-diphosphate. This is 4-hydroxy-3-methylbut-2-en-1-yl diphosphate synthase (flavodoxin) from Hahella chejuensis (strain KCTC 2396).